The following is a 276-amino-acid chain: MSKRLALAYSKKDPAGSGMAREIKDMMGEEFEISDKRCELIEVDREILYINGSQFEGFDYLAVLSRHSGTPNHPIFTAHVSGNFGRARYGGDHFKLSIAIPSLMKEYLISVSKRAEEIGYWVGFEPTHHGPTLDIPTAFLEIGCDETAWRDERGLRAAAESVLEAIESWKDGKFVAAVAFGGPHINDHFTRVELFTRFAIGHAARKLDAEWVDGEMVKQAVSRNGEPTGVAIVDNKGLKGEDRERIEGALRDLGLEVIRVKKILRDELGEEEGEEI.

Belongs to the DtdA deacylase family. In terms of assembly, monomer. It depends on Zn(2+) as a cofactor.

It carries out the reaction a D-aminoacyl-tRNA + H2O = a tRNA + a D-alpha-amino acid + H(+). The catalysed reaction is glycyl-tRNA(Ala) + H2O = tRNA(Ala) + glycine + H(+). Its function is as follows. D-aminoacyl-tRNA deacylase with broad substrate specificity. By recycling D-aminoacyl-tRNA to D-amino acids and free tRNA molecules, this enzyme counteracts the toxicity associated with the formation of D-aminoacyl-tRNA entities in vivo. In Korarchaeum cryptofilum (strain OPF8), this protein is D-aminoacyl-tRNA deacylase.